The sequence spans 354 residues: Guanine nucleotide-binding protein G(o) subunit alpha (354 aa).

Glycine 2 carries the N-myristoyl glycine lipid modification. Cysteine 3 is lipidated: S-palmitoyl cysteine. One can recognise a G-alpha domain in the interval lysine 32–tyrosine 354. The segment at lysine 35–threonine 48 is G1 motif. Residues glycine 40–serine 47, leucine 176–threonine 182, aspartate 201–glutamine 205, asparagine 270–aspartate 273, and alanine 326 each bind GTP. Residues serine 47 and threonine 182 each contribute to the Mg(2+) site. Positions aspartate 174 to threonine 182 are G2 motif. The tract at residues phenylalanine 197–arginine 206 is G3 motif. The segment at isoleucine 266–aspartate 273 is G4 motif. The tract at residues threonine 324–threonine 329 is G5 motif.

It belongs to the G-alpha family. G(i/o/t/z) subfamily. In terms of assembly, g proteins are composed of 3 units; alpha, beta and gamma. The alpha chain contains the guanine nucleotide binding site.

In terms of biological role, guanine nucleotide-binding proteins (G proteins) are involved as modulators or transducers in various transmembrane signaling systems. The G(o) protein function is not clear. This is Guanine nucleotide-binding protein G(o) subunit alpha from Lymnaea stagnalis (Great pond snail).